Consider the following 447-residue polypeptide: Probable glycine dehydrogenase (decarboxylating) subunit 1 (447 aa).

This sequence belongs to the GcvP family. N-terminal subunit subfamily. In terms of assembly, the glycine cleavage system is composed of four proteins: P, T, L and H. In this organism, the P 'protein' is a heterodimer of two subunits.

The enzyme catalyses N(6)-[(R)-lipoyl]-L-lysyl-[glycine-cleavage complex H protein] + glycine + H(+) = N(6)-[(R)-S(8)-aminomethyldihydrolipoyl]-L-lysyl-[glycine-cleavage complex H protein] + CO2. In terms of biological role, the glycine cleavage system catalyzes the degradation of glycine. The P protein binds the alpha-amino group of glycine through its pyridoxal phosphate cofactor; CO(2) is released and the remaining methylamine moiety is then transferred to the lipoamide cofactor of the H protein. This is Probable glycine dehydrogenase (decarboxylating) subunit 1 from Sulfolobus acidocaldarius (strain ATCC 33909 / DSM 639 / JCM 8929 / NBRC 15157 / NCIMB 11770).